The chain runs to 432 residues: Glutamate-1-semialdehyde 2,1-aminomutase (432 aa).

Lys-265 bears the N6-(pyridoxal phosphate)lysine mark.

Belongs to the class-III pyridoxal-phosphate-dependent aminotransferase family. HemL subfamily. Homodimer. The cofactor is pyridoxal 5'-phosphate.

The protein resides in the cytoplasm. It carries out the reaction (S)-4-amino-5-oxopentanoate = 5-aminolevulinate. It participates in porphyrin-containing compound metabolism; protoporphyrin-IX biosynthesis; 5-aminolevulinate from L-glutamyl-tRNA(Glu): step 2/2. The sequence is that of Glutamate-1-semialdehyde 2,1-aminomutase from Vibrio cholerae serotype O1 (strain ATCC 39541 / Classical Ogawa 395 / O395).